Consider the following 382-residue polypeptide: MSDVIKNFFKLESAGGILLVIAAAIAMMIANSSLAPMYDTFLHSYIGGMSVSHWINDGLMAVFFLLIGLEVKRELLEGALKSKETAIFPAIAAVGGMLAPALVYVAFNMGDPEALSGWAIPAATDIAFALGIMALLGNRVPVSLKVFLLALAIIDDLGVVVIIAFFYTSDLSVLALVIGFVMTGLLFLLNAKHVTKIRWYLLVGFILWVSVLQSGVHATLAGVVLGFAIPLKGNKGERSPLKHMEHALHPYVAFAILPVFAFANAGISLEGVSLDSLTTTLPLGVALGLFLGKPLGIFSFSYLAVKSGVAKLPTGVNMKHIFAVSVLCGIGFTMSIFISSLAFGGVNPEFDKLARLGILMGSTFAAVVGYALLSISLPKKAA.

The next 11 membrane-spanning stretches (helical) occupy residues 14 to 34 (AGGI…NSSL), 49 to 69 (MSVS…LIGL), 87 to 107 (IFPA…YVAF), 117 to 137 (GWAI…ALLG), 146 to 166 (VFLL…IAFF), 171 to 191 (LSVL…LLNA), 205 to 225 (FILW…GVVL), 252 to 272 (VAFA…LEGV), 285 to 305 (VALG…YLAV), 321 to 341 (IFAV…ISSL), and 356 to 376 (LGIL…LSIS).

This sequence belongs to the NhaA Na(+)/H(+) (TC 2.A.33) antiporter family.

The protein resides in the cell inner membrane. It catalyses the reaction Na(+)(in) + 2 H(+)(out) = Na(+)(out) + 2 H(+)(in). Functionally, na(+)/H(+) antiporter that extrudes sodium in exchange for external protons. This Aliivibrio fischeri (strain ATCC 700601 / ES114) (Vibrio fischeri) protein is Na(+)/H(+) antiporter NhaA.